A 325-amino-acid chain; its full sequence is Flavin-dependent thymidylate synthase (325 aa).

One can recognise a ThyX domain in the interval 12 to 267 (ISVRLLEYTG…PRLFRWAGPS (256 aa)). Residues Ser-65, 89-91 (RHR), and Gln-97 contribute to the FAD site. DUMP-binding positions include 86 to 89 (QLVR) and 97 to 101 (QLSHR). A ThyX motif motif is present at residues 89–99 (RHRVASYTQLS). Residues 110–159 (AALKACESIGLDCPSKPAETEGGRKAAYRLYSQALERAARDFGASERFAI) form an insert region. A dUMP-binding site is contributed by Arg-205. FAD is bound at residue 221 to 223 (NAR). Residue Arg-233 participates in dUMP binding. Catalysis depends on Arg-233, which acts as the Involved in ionization of N3 of dUMP, leading to its activation.

The protein belongs to the thymidylate synthase ThyX family. As to quaternary structure, homotetramer. Requires FAD as cofactor.

The catalysed reaction is dUMP + (6R)-5,10-methylene-5,6,7,8-tetrahydrofolate + NADPH + H(+) = dTMP + (6S)-5,6,7,8-tetrahydrofolate + NADP(+). The protein operates within pyrimidine metabolism; dTTP biosynthesis. Catalyzes the reductive methylation of 2'-deoxyuridine-5'-monophosphate (dUMP) to 2'-deoxythymidine-5'-monophosphate (dTMP) while utilizing 5,10-methylenetetrahydrofolate (mTHF) as the methyl donor, and NADPH and FADH(2) as the reductant. The protein is Flavin-dependent thymidylate synthase of Aeropyrum pernix (strain ATCC 700893 / DSM 11879 / JCM 9820 / NBRC 100138 / K1).